Consider the following 489-residue polypeptide: Cysteine--tRNA ligase (489 aa).

Cysteine 29 is a binding site for Zn(2+). The short motif at 31 to 41 (ITSYDYCHIGH) is the 'HIGH' region element. Cysteine 209, histidine 234, and glutamate 238 together coordinate Zn(2+). The 'KMSKS' region motif lies at 266 to 270 (KMSKS). Lysine 269 provides a ligand contact to ATP.

It belongs to the class-I aminoacyl-tRNA synthetase family. As to quaternary structure, monomer. Zn(2+) serves as cofactor.

The protein localises to the cytoplasm. It catalyses the reaction tRNA(Cys) + L-cysteine + ATP = L-cysteinyl-tRNA(Cys) + AMP + diphosphate. This chain is Cysteine--tRNA ligase, found in Desulfotalea psychrophila (strain LSv54 / DSM 12343).